The sequence spans 116 residues: MKKYFLILASFMLVACSSSEQNLTYSTKPILNITSSLSPLIQVETTQKSAVIKNKSQQLLNISYHLYWYDHLGVTQIWENQQESYSAQFLLKPQEQKSIDLTKPTVESKNYRLYLK.

Positions 1 to 15 (MKKYFLILASFMLVA) are cleaved as a signal peptide.

This is an uncharacterized protein from Haemophilus influenzae (strain ATCC 51907 / DSM 11121 / KW20 / Rd).